Here is a 506-residue protein sequence, read N- to C-terminus: TOM1-like protein 3 (506 aa).

A VHS domain is found at 12–141 (ATNDMLIGPD…ELRSAGIEFP (130 aa)). One can recognise a GAT domain in the interval 180-268 (DASALSMEEI…VLQHHDDKAK (89 aa)). Disordered regions lie at residues 266–328 (KAKG…PPSS), 351–384 (ETFE…SKSP), and 398–477 (EQLP…PEDI). Acidic residues predominate over residues 288 to 298 (DDDDDESDDDF). Position 294 is a phosphoserine (Ser294). Residues 358 to 368 (PPSTSQSSNHD) are compositionally biased toward polar residues. Phosphoserine is present on Ser383. The span at 450 to 460 (QSRNLSLNPTA) shows a compositional bias: polar residues. Residues 468–477 (PKKDDKPEDI) are compositionally biased toward basic and acidic residues.

It belongs to the TOM1 family. As to expression, preferentially expressed in cauline leaves.

The protein resides in the membrane. In terms of biological role, might contribute to the loading of the ESCRT machinery. This Arabidopsis thaliana (Mouse-ear cress) protein is TOM1-like protein 3.